Here is a 569-residue protein sequence, read N- to C-terminus: Archaeosine synthase (569 aa).

The PUA domain occupies 495 to 569 (SGGKDINYIE…ALVNIRNVKS (75 aa)).

It belongs to the archaeosine synthase type 1 family. Homodimer.

The enzyme catalyses 7-cyano-7-carbaguanosine(15) in tRNA + L-glutamine + H2O = archaeosine(15) in tRNA + L-glutamate. It functions in the pathway tRNA modification; archaeosine-tRNA biosynthesis. Its function is as follows. Is responsible for the final step in the biosynthesis of archaeosine, a modified nucleoside present in the dihydrouridine loop (D-loop) of archaeal tRNA. Catalyzes the conversion of 7-cyano-7-deazaguanine (preQ0)-modified tRNA to archaeosine-tRNA, transforming a nitrile group to a formamidine group. Can use either glutamine, asparagine or ammonium as amino donor. The chain is Archaeosine synthase from Methanocaldococcus jannaschii (strain ATCC 43067 / DSM 2661 / JAL-1 / JCM 10045 / NBRC 100440) (Methanococcus jannaschii).